Consider the following 302-residue polypeptide: 33 kDa chaperonin (302 aa).

Intrachain disulfides connect Cys247-Cys249 and Cys280-Cys283.

It belongs to the HSP33 family. Under oxidizing conditions two disulfide bonds are formed involving the reactive cysteines. Under reducing conditions zinc is bound to the reactive cysteines and the protein is inactive.

Its subcellular location is the cytoplasm. Functionally, redox regulated molecular chaperone. Protects both thermally unfolding and oxidatively damaged proteins from irreversible aggregation. Plays an important role in the bacterial defense system toward oxidative stress. The chain is 33 kDa chaperonin from Prochlorococcus marinus (strain AS9601).